A 268-amino-acid chain; its full sequence is Putative cysteine-rich repeat secretory protein 5 (268 aa).

The first 24 residues, 1-24, serve as a signal peptide directing secretion; it reads MTGINTHFAVALFCFFSFSLRAMS. 2 consecutive Gnk2-homologous domains span residues 27–129 and 135–248; these read SQML…NVSF and DVPS…ISAL.

This sequence belongs to the cysteine-rich repeat secretory protein family.

It is found in the secreted. This is Putative cysteine-rich repeat secretory protein 5 (CRRSP5) from Arabidopsis thaliana (Mouse-ear cress).